Consider the following 350-residue polypeptide: 3-isopropylmalate dehydrogenase (350 aa).

G76 to E87 provides a ligand contact to NAD(+). The substrate site is built by R94, R104, R132, and D217. 3 residues coordinate Mg(2+): D217, D241, and D245. G275 to N287 provides a ligand contact to NAD(+).

The protein belongs to the isocitrate and isopropylmalate dehydrogenases family. LeuB type 1 subfamily. Homodimer. It depends on Mg(2+) as a cofactor. Requires Mn(2+) as cofactor.

Its subcellular location is the cytoplasm. It catalyses the reaction (2R,3S)-3-isopropylmalate + NAD(+) = 4-methyl-2-oxopentanoate + CO2 + NADH. It participates in amino-acid biosynthesis; L-leucine biosynthesis; L-leucine from 3-methyl-2-oxobutanoate: step 3/4. Its function is as follows. Catalyzes the oxidation of 3-carboxy-2-hydroxy-4-methylpentanoate (3-isopropylmalate) to 3-carboxy-4-methyl-2-oxopentanoate. The product decarboxylates to 4-methyl-2 oxopentanoate. This is 3-isopropylmalate dehydrogenase from Listeria monocytogenes serovar 1/2a (strain ATCC BAA-679 / EGD-e).